A 435-amino-acid polypeptide reads, in one-letter code: GTPase Der (435 aa).

EngA-type G domains are found at residues 8–169 (NLVA…NFEN) and 176–351 (FKIA…NNLS). GTP is bound by residues 14–21 (GKPNVGKS), 61–65 (DTGGI), 123–126 (NKLD), 182–189 (GKPNAGKS), 229–233 (DTAGI), and 294–297 (NKWD). Residues 352–435 (REIKQNLLND…PINLVLKKNK (84 aa)) enclose the KH-like domain.

This sequence belongs to the TRAFAC class TrmE-Era-EngA-EngB-Septin-like GTPase superfamily. EngA (Der) GTPase family. Associates with the 50S ribosomal subunit.

Functionally, GTPase that plays an essential role in the late steps of ribosome biogenesis. The sequence is that of GTPase Der from Mycoplasmopsis pulmonis (strain UAB CTIP) (Mycoplasma pulmonis).